The following is a 141-amino-acid chain: Protein MGF 100-2L (141 aa).

Belongs to the asfivirus MGF 100 family.

Plays a role in virus cell tropism, and may be required for efficient virus replication in macrophages. The sequence is that of Protein MGF 100-2L from African swine fever virus (isolate Tick/Malawi/Lil 20-1/1983) (ASFV).